Reading from the N-terminus, the 182-residue chain is Probable RNA 2'-phosphotransferase (182 aa).

This sequence belongs to the KptA/TPT1 family.

Its function is as follows. Removes the 2'-phosphate from RNA via an intermediate in which the phosphate is ADP-ribosylated by NAD followed by a presumed transesterification to release the RNA and generate ADP-ribose 1''-2''-cyclic phosphate (APPR&gt;P). May function as an ADP-ribosylase. This Flavobacterium johnsoniae (strain ATCC 17061 / DSM 2064 / JCM 8514 / BCRC 14874 / CCUG 350202 / NBRC 14942 / NCIMB 11054 / UW101) (Cytophaga johnsonae) protein is Probable RNA 2'-phosphotransferase.